The sequence spans 428 residues: Enolase (428 aa).

Glutamine 163 is a binding site for (2R)-2-phosphoglycerate. Residue glutamate 205 is the Proton donor of the active site. 3 residues coordinate Mg(2+): aspartate 242, glutamate 285, and aspartate 312. Positions 337, 366, 367, and 388 each coordinate (2R)-2-phosphoglycerate. Catalysis depends on lysine 337, which acts as the Proton acceptor.

It belongs to the enolase family. The cofactor is Mg(2+).

Its subcellular location is the cytoplasm. The protein localises to the secreted. It localises to the cell surface. The enzyme catalyses (2R)-2-phosphoglycerate = phosphoenolpyruvate + H2O. The protein operates within carbohydrate degradation; glycolysis; pyruvate from D-glyceraldehyde 3-phosphate: step 4/5. Functionally, catalyzes the reversible conversion of 2-phosphoglycerate (2-PG) into phosphoenolpyruvate (PEP). It is essential for the degradation of carbohydrates via glycolysis. This is Enolase from Polynucleobacter asymbioticus (strain DSM 18221 / CIP 109841 / QLW-P1DMWA-1) (Polynucleobacter necessarius subsp. asymbioticus).